Consider the following 285-residue polypeptide: Urease accessory protein UreD (285 aa).

Belongs to the UreD family. As to quaternary structure, ureD, UreF and UreG form a complex that acts as a GTP-hydrolysis-dependent molecular chaperone, activating the urease apoprotein by helping to assemble the nickel containing metallocenter of UreC. The UreE protein probably delivers the nickel.

Its subcellular location is the cytoplasm. Functionally, required for maturation of urease via the functional incorporation of the urease nickel metallocenter. The sequence is that of Urease accessory protein UreD from Cenarchaeum symbiosum (strain A).